A 299-amino-acid polypeptide reads, in one-letter code: Dye-decolorizing peroxidase YfeX (299 aa).

Heme is bound at residue His-215.

It belongs to the DyP-type peroxidase family. Heme b is required as a cofactor.

The protein localises to the cytoplasm. Has both general peroxidase activity and dye-decolorizing activity. Can catalyze the oxidation of 2,2'-azino-bis(3-ethylbenzothiazoline-6-sulphonic acid) (ABTS), and the phenolic compounds guaiacol and catechol. Also decolorizes the anthraquinone dye reactive blue 19 (RB19). This is Dye-decolorizing peroxidase YfeX from Escherichia coli O157:H7.